The following is a 312-amino-acid chain: DnaJ homolog subfamily B member 7 (312 aa).

The region spanning 3–69 (DYYEVLGVQR…EKRDIYDKYG (67 aa)) is the J domain. The interval 272–312 (SWVTNKKEPSIFSAGFKEGGRRKKKKHKEGQKKKKSNKRNH) is disordered. Positions 291–312 (GRRKKKKHKEGQKKKKSNKRNH) are enriched in basic residues.

Functionally, probably acts as a co-chaperone. In Mus musculus (Mouse), this protein is DnaJ homolog subfamily B member 7 (Dnajb7).